Reading from the N-terminus, the 262-residue chain is pFDCC methylesterase MES16 (262 aa).

S87 functions as the Acyl-ester intermediate in the catalytic mechanism. Catalysis depends on charge relay system residues D211 and H239.

Belongs to the AB hydrolase superfamily. Methylesterase family.

The protein localises to the cytoplasm. It catalyses the reaction methyl (indol-3-yl)acetate + H2O = (indol-3-yl)acetate + methanol + H(+). The catalysed reaction is methyl (-)-jasmonate + H2O = jasmonate + methanol + H(+). The enzyme catalyses primary fluorescent dioxobilin-type chlorophyll catabolite + H2O = O13(4)-desmethyl pFDCC + methanol + H(+). The protein operates within plant hormone biosynthesis. Its pathway is lipid metabolism; oxylipin biosynthesis. It participates in porphyrin-containing compound metabolism; chlorophyll degradation. In terms of biological role, involved in the chlorophyll breakdown by its action in fluorescent chlorophyll catabolites (FCCs) demethylation. Demethylates the C13(2)-carboxymethyl group present at the isocyclic ring of chlorophyll. Uses primary fluorescent dioxobilin-type chlorophyll catabolite (pFDCC) as substrate to produce O13(4)-desmethyl pFDCC. Also able to catalyze pheophorbides in vitro. Methylesterase shown to have carboxylesterase activity, methyl indole-3-acetic acid (MeIAA) esterase activity and methyl jasmonate (MeJA) esterase activity in vitro. This chain is pFDCC methylesterase MES16, found in Arabidopsis thaliana (Mouse-ear cress).